Consider the following 592-residue polypeptide: UvrABC system protein C (592 aa).

A GIY-YIG domain is found at A15 to I92. The 36-residue stretch at D197–T232 folds into the UVR domain.

This sequence belongs to the UvrC family. Interacts with UvrB in an incision complex.

It is found in the cytoplasm. Its function is as follows. The UvrABC repair system catalyzes the recognition and processing of DNA lesions. UvrC both incises the 5' and 3' sides of the lesion. The N-terminal half is responsible for the 3' incision and the C-terminal half is responsible for the 5' incision. The sequence is that of UvrABC system protein C from Latilactobacillus sakei subsp. sakei (strain 23K) (Lactobacillus sakei subsp. sakei).